The chain runs to 202 residues: Superoxide dismutase [Mn] (202 aa).

Position 27 (H27) interacts with Mn(2+). Phosphothreonine occurs at positions 34 and 70. H82, D164, and H168 together coordinate Mn(2+).

The protein belongs to the iron/manganese superoxide dismutase family. Homodimer; under aerobic conditions. Under anaerobic conditions it is a component of the so-called 'green protein' complex (GPC), which consists of at least two components, SodA and a nucleoside diphosphate kinase (NDK). Mn(2+) is required as a cofactor.

It is found in the cytoplasm. The catalysed reaction is 2 superoxide + 2 H(+) = H2O2 + O2. In terms of biological role, destroys superoxide anion radicals which are normally produced within the cells and which are toxic to biological systems. Active only in homodimeric state. The polypeptide is Superoxide dismutase [Mn] (sodA) (Virgibacillus halodenitrificans (Bacillus halodenitrificans)).